Reading from the N-terminus, the 240-residue chain is Sugar fermentation stimulation protein homolog (240 aa).

Belongs to the SfsA family.

This is Sugar fermentation stimulation protein homolog from Natranaerobius thermophilus (strain ATCC BAA-1301 / DSM 18059 / JW/NM-WN-LF).